Reading from the N-terminus, the 198-residue chain is Glycerol-3-phosphate acyltransferase (198 aa).

Transmembrane regions (helical) follow at residues 2-22 (IIVIITVMVSFLCGSIPTGYL), 55-75 (MITQVMDILKGIIPVLLCMLI), 88-108 (YLSIIVIAVILGHDYTPFLGF), 118-138 (VGAFFLLAPAAVLAGAVVYFV), and 162-182 (IALRLPIEITVCAIIACGLLI).

Belongs to the PlsY family. Probably interacts with PlsX.

The protein localises to the cell membrane. It catalyses the reaction an acyl phosphate + sn-glycerol 3-phosphate = a 1-acyl-sn-glycero-3-phosphate + phosphate. The protein operates within lipid metabolism; phospholipid metabolism. In terms of biological role, catalyzes the transfer of an acyl group from acyl-phosphate (acyl-PO(4)) to glycerol-3-phosphate (G3P) to form lysophosphatidic acid (LPA). This enzyme utilizes acyl-phosphate as fatty acyl donor, but not acyl-CoA or acyl-ACP. The polypeptide is Glycerol-3-phosphate acyltransferase (Clostridium acetobutylicum (strain ATCC 824 / DSM 792 / JCM 1419 / IAM 19013 / LMG 5710 / NBRC 13948 / NRRL B-527 / VKM B-1787 / 2291 / W)).